An 838-amino-acid chain; its full sequence is Kinesin-like protein KIFC2 (838 aa).

A compositionally biased stretch (low complexity) spans 23 to 32; the sequence is AAAAEPGDPA. Disordered stretches follow at residues 23-48 and 140-185; these read AAAA…DLPA and LLQG…GQQP. The span at 156–167 shows a compositional bias: polar residues; that stretch reads DGSTSQEESPSH. A coiled-coil region spans residues 186–351; that stretch reads LQLEEDQRAW…SLRQGCGDLR (166 aa). Residues 409–740 form the Kinesin motor domain; the sequence is NIRVLCRLRP…ARRSPRGRRI (332 aa). 484–491 lines the ATP pocket; it reads GQTGTGKT. A disordered region spans residues 718–792; that stretch reads RSPPTRARPP…SPGPPAPLRR (75 aa).

This sequence belongs to the TRAFAC class myosin-kinesin ATPase superfamily. Kinesin family.

It localises to the cytoplasm. The protein localises to the cytoskeleton. May play a role in microtubule-dependent retrograde axonal transport. May function as the motor for the transport of multivesicular body (MVB)-like organelles in dendrites. This is Kinesin-like protein KIFC2 (KIFC2) from Homo sapiens (Human).